The chain runs to 179 residues: Crossover junction endodeoxyribonuclease RuvC (179 aa).

Active-site residues include Asp-7 and Glu-67. Positions 7 and 67 each coordinate Mn(2+). A DNA-binding loop motif is present at residues 68–74 (DQILRRQ). Residues His-139 and Asp-142 contribute to the active site. His-139 contributes to the Mn(2+) binding site.

The protein belongs to the RuvC family. Homodimer which binds Holliday junction (HJ) DNA. The HJ becomes 2-fold symmetrical on binding to RuvC with unstacked arms; it has a different conformation from HJ DNA in complex with RuvA. In the full resolvosome a probable DNA-RuvA(4)-RuvB(12)-RuvC(2) complex forms which resolves the HJ. It depends on Mn(2+) as a cofactor.

Its subcellular location is the cytoplasm. The catalysed reaction is Endonucleolytic cleavage at a junction such as a reciprocal single-stranded crossover between two homologous DNA duplexes (Holliday junction).. The RuvA-RuvB-RuvC complex processes Holliday junction (HJ) DNA during genetic recombination and DNA repair. Endonuclease that resolves HJ intermediates. Cleaves cruciform DNA by making single-stranded nicks across the HJ at symmetrical positions within the homologous arms, probably yielding a 5'-phosphate and a 3'-hydroxyl group; requires a central core of homology in the junction. The consensus cleavage sequence is 5'-(G/C)TC(C/G)-3' (a different site than E.coli); cleavage occurs on the 3'-side of the TC dinucleotide at the point of strand exchange. Also resolves nicked HJ intermediates, replication forks and Y-junction DNA in vitro. HJ branch migration catalyzed by RuvA-RuvB allows RuvC to scan DNA until it finds its consensus sequence, where it cleaves and resolves the cruciform DNA. In terms of biological role, binds HJ DNA independently of homologous core or consensus sequence; Mn(2+) is not essential for binding but improves it, while &gt;1.0 mM Mg(2+) inhibit binding. Also binds Y-junction DNA less well. Requires a homologous core to cleave DNA. Another study shows divalent cations (Mn(2+), Mg(2+) and Ca(2+), tested up to 5.0 mM) improve DNA binding considerably over binding in their absence. This chain is Crossover junction endodeoxyribonuclease RuvC, found in Deinococcus radiodurans (strain ATCC 13939 / DSM 20539 / JCM 16871 / CCUG 27074 / LMG 4051 / NBRC 15346 / NCIMB 9279 / VKM B-1422 / R1).